A 1582-amino-acid polypeptide reads, in one-letter code: Nik-related protein kinase (1582 aa).

The Protein kinase domain maps to 25-313 (FSLDKTIGLG…SANMLQHPFV (289 aa)). ATP contacts are provided by residues 31 to 39 (IGLGTYGRI) and lysine 54. Catalysis depends on aspartate 177, which acts as the Proton acceptor. Low complexity-rich tracts occupy residues 492–507 (QVQS…QTQT), 527–538 (PEQQRQGQAPEQ), and 551–572 (EQNQ…AQAE). Residues 492–579 (QVQSQVSKKQ…QAETEAEEPE (88 aa)) form a disordered region. A coiled-coil region spans residues 725-759 (QRRQRRWEDIFNQHEEELRQVDKDKEDESSDNDEV). Disordered regions lie at residues 783 to 859 (EVQE…PPYS) and 926 to 1156 (ASAD…GSGM). 3 stretches are compositionally biased toward polar residues: residues 803–814 (FSSSVPQRSLLE), 825–834 (RSSQNRQNWL), and 850–859 (RRSQSSPPYS). Serine 852 and serine 855 each carry phosphoserine. The segment covering 926 to 944 (ASADTDGDDDDESNDTFED) has biased composition (acidic residues). Basic and acidic residues-rich tracts occupy residues 965-978 (VCKD…KFVD) and 999-1016 (GSCK…EEAY). A phosphoserine mark is found at serine 1027, serine 1031, and serine 1034. Composition is skewed to basic and acidic residues over residues 1043–1061 (QEEH…EGDG) and 1125–1135 (PDHESDNKDIS). The span at 1136 to 1154 (ESSTQSDFSANHSSPSKGS) shows a compositional bias: polar residues. The 344-residue stretch at 1209–1552 (TSEICCGSLW…RFLCTRGDKL (344 aa)) folds into the CNH domain.

This sequence belongs to the protein kinase superfamily. STE Ser/Thr protein kinase family. STE20 subfamily.

It carries out the reaction L-seryl-[protein] + ATP = O-phospho-L-seryl-[protein] + ADP + H(+). The enzyme catalyses L-threonyl-[protein] + ATP = O-phospho-L-threonyl-[protein] + ADP + H(+). Its function is as follows. May phosphorylate cofilin-1 and induce actin polymerization through this process, during the late stages of embryogenesis. Involved in the TNF-alpha-induced signaling pathway. This Homo sapiens (Human) protein is Nik-related protein kinase (NRK).